A 140-amino-acid chain; its full sequence is MEVPGDRFYTKTHEWVKISENRAIIGITSYAIEQLGDITFLEVKPKGTLIKKGEVLGVVESSKTTEKIYAPVSGEIVEINRDCGVVEEGSSEVPIGLEKIVEDPYEEGWIVVLEVKGDLSSELRDLMSSEDYLKHLKEGH.

Residues arginine 22–glutamate 114 form the Lipoyl-binding domain. The residue at position 63 (lysine 63) is an N6-lipoyllysine.

Belongs to the GcvH family. In terms of assembly, the glycine cleavage system is composed of four proteins: P, T, L and H. (R)-lipoate is required as a cofactor.

The glycine cleavage system catalyzes the degradation of glycine. The H protein shuttles the methylamine group of glycine from the P protein to the T protein. This chain is Probable glycine cleavage system H protein, found in Korarchaeum cryptofilum (strain OPF8).